The following is a 444-amino-acid chain: Tubulin beta-2 chain (444 aa).

Q11, E69, S138, G142, T143, G144, N204, and N226 together coordinate GTP. E69 contacts Mg(2+). The disordered stretch occupies residues 422 to 444; that stretch reads YQQYQDATAEEDDYDDGEGSTGD. A compositionally biased stretch (acidic residues) spans 429–444; it reads TAEEDDYDDGEGSTGD.

This sequence belongs to the tubulin family. Dimer of alpha and beta chains. A typical microtubule is a hollow water-filled tube with an outer diameter of 25 nm and an inner diameter of 15 nM. Alpha-beta heterodimers associate head-to-tail to form protofilaments running lengthwise along the microtubule wall with the beta-tubulin subunit facing the microtubule plus end conferring a structural polarity. Microtubules usually have 13 protofilaments but different protofilament numbers can be found in some organisms and specialized cells. Requires Mg(2+) as cofactor. As to expression, found in areas of rapidly dividing tissues.

The protein resides in the cytoplasm. Its subcellular location is the cytoskeleton. Tubulin is the major constituent of microtubules, a cylinder consisting of laterally associated linear protofilaments composed of alpha- and beta-tubulin heterodimers. Microtubules grow by the addition of GTP-tubulin dimers to the microtubule end, where a stabilizing cap forms. Below the cap, tubulin dimers are in GDP-bound state, owing to GTPase activity of alpha-tubulin. The protein is Tubulin beta-2 chain (TUBB2) of Daucus carota (Wild carrot).